Reading from the N-terminus, the 142-residue chain is Large ribosomal subunit protein bL17 (142 aa).

It belongs to the bacterial ribosomal protein bL17 family. In terms of assembly, part of the 50S ribosomal subunit. Contacts protein L32.

This is Large ribosomal subunit protein bL17 from Wolbachia pipientis wMel.